A 511-amino-acid chain; its full sequence is Coatomer subunit delta (511 aa).

Residues glutamine 168–glycine 177 are compositionally biased toward basic and acidic residues. A disordered region spans residues glutamine 168–serine 188. Serine 223 bears the Phosphoserine mark. 2 positions are modified to N6-acetyllysine: lysine 233 and lysine 241. The residue at position 244 (serine 244) is a Phosphoserine. The 241-residue stretch at methionine 271 to leucine 511 folds into the MHD domain. N6-acetyllysine occurs at positions 309 and 351. Serine 493 carries the post-translational modification Phosphoserine.

Belongs to the adaptor complexes medium subunit family. Delta-COP subfamily. In terms of assembly, oligomeric complex that consists of at least the alpha, beta, beta', gamma, delta, epsilon and zeta subunits.

The protein resides in the cytoplasm. It is found in the golgi apparatus membrane. It localises to the cytoplasmic vesicle. The protein localises to the COPI-coated vesicle membrane. Its function is as follows. The coatomer is a cytosolic protein complex that binds to dilysine motifs and reversibly associates with Golgi non-clathrin-coated vesicles, which further mediate biosynthetic protein transport from the ER, via the Golgi up to the trans Golgi network. Coatomer complex is required for budding from Golgi membranes, and is essential for the retrograde Golgi-to-ER transport of dilysine-tagged proteins. In mammals, the coatomer can only be recruited by membranes associated to ADP-ribosylation factors (ARFs), which are small GTP-binding proteins; the complex also influences the Golgi structural integrity, as well as the processing, activity, and endocytic recycling of LDL receptors. The protein is Coatomer subunit delta (Arcn1) of Mus musculus (Mouse).